Reading from the N-terminus, the 176-residue chain is MVKEIARTIEIPEGVSVSLSQDVFTAKGPKGTVERTFWYPGIKIEVREGEVVVDAESSRKEQKAMVGTFASHLKNLIIGVSEGFECKMNIVYAHFPMQVKVEGKTLVIGNFLGEKKPRIAKILGETKVKVSGNEIVVSGINKEDVGQTAANIEQKTKIKRFDPRIFQDGIYIVQKA.

It belongs to the universal ribosomal protein uL6 family. Part of the 50S ribosomal subunit.

In terms of biological role, this protein binds to the 23S rRNA, and is important in its secondary structure. It is located near the subunit interface in the base of the L7/L12 stalk, and near the tRNA binding site of the peptidyltransferase center. This is Large ribosomal subunit protein uL6 from Methanosarcina mazei (strain ATCC BAA-159 / DSM 3647 / Goe1 / Go1 / JCM 11833 / OCM 88) (Methanosarcina frisia).